The sequence spans 204 residues: N-(5'-phosphoribosyl)anthranilate isomerase (204 aa).

This sequence belongs to the TrpF family.

It carries out the reaction N-(5-phospho-beta-D-ribosyl)anthranilate = 1-(2-carboxyphenylamino)-1-deoxy-D-ribulose 5-phosphate. It participates in amino-acid biosynthesis; L-tryptophan biosynthesis; L-tryptophan from chorismate: step 3/5. The polypeptide is N-(5'-phosphoribosyl)anthranilate isomerase (Bacillus cereus (strain B4264)).